A 312-amino-acid chain; its full sequence is Acetyl-coenzyme A carboxylase carboxyl transferase subunit alpha (312 aa).

The CoA carboxyltransferase C-terminal domain occupies 25-286 (GDDSAVEILK…GNYIIEKLNE (262 aa)).

This sequence belongs to the AccA family. In terms of assembly, acetyl-CoA carboxylase is a heterohexamer composed of biotin carboxyl carrier protein (AccB), biotin carboxylase (AccC) and two subunits each of ACCase subunit alpha (AccA) and ACCase subunit beta (AccD).

The protein localises to the cytoplasm. It catalyses the reaction N(6)-carboxybiotinyl-L-lysyl-[protein] + acetyl-CoA = N(6)-biotinyl-L-lysyl-[protein] + malonyl-CoA. It functions in the pathway lipid metabolism; malonyl-CoA biosynthesis; malonyl-CoA from acetyl-CoA: step 1/1. In terms of biological role, component of the acetyl coenzyme A carboxylase (ACC) complex. First, biotin carboxylase catalyzes the carboxylation of biotin on its carrier protein (BCCP) and then the CO(2) group is transferred by the carboxyltransferase to acetyl-CoA to form malonyl-CoA. The chain is Acetyl-coenzyme A carboxylase carboxyl transferase subunit alpha from Campylobacter hominis (strain ATCC BAA-381 / DSM 21671 / CCUG 45161 / LMG 19568 / NCTC 13146 / CH001A).